Here is a 69-residue protein sequence, read N- to C-terminus: Beta-defensin 122 (69 aa).

The signal sequence occupies residues 1-19 (MKPFLVTLAVLLLFFQVTA). Cystine bridges form between cysteine 26/cysteine 53, cysteine 33/cysteine 47, and cysteine 37/cysteine 54.

It belongs to the beta-defensin family.

It localises to the secreted. Its function is as follows. Has antibacterial activity. The polypeptide is Beta-defensin 122 (DEFB122) (Macaca mulatta (Rhesus macaque)).